A 333-amino-acid polypeptide reads, in one-letter code: 5-formaminoimidazole-4-carboxamide-1-(beta)-D-ribofuranosyl 5'-monophosphate synthetase (333 aa).

The 5-amino-1-(5-phospho-beta-D-ribosyl)imidazole-4-carboxamide site is built by His10 and Ser74. The region spanning 95–324 (RNLFAWESNQ…ISREIRLALN (230 aa)) is the ATP-grasp domain. ATP-binding positions include 125–185 (VEDV…VPMY) and Glu207. Asn230 provides a ligand contact to 5-amino-1-(5-phospho-beta-D-ribosyl)imidazole-4-carboxamide. The Mg(2+) site is built by Glu269 and Glu282.

It belongs to the phosphohexose mutase family. It depends on Mg(2+) as a cofactor. Mn(2+) serves as cofactor.

It carries out the reaction 5-amino-1-(5-phospho-beta-D-ribosyl)imidazole-4-carboxamide + formate + ATP = 5-formamido-1-(5-phospho-D-ribosyl)imidazole-4-carboxamide + ADP + phosphate. Its pathway is purine metabolism; IMP biosynthesis via de novo pathway; 5-formamido-1-(5-phospho-D-ribosyl)imidazole-4-carboxamide from 5-amino-1-(5-phospho-D-ribosyl)imidazole-4-carboxamide (formate route): step 1/1. Functionally, catalyzes the ATP- and formate-dependent formylation of 5-aminoimidazole-4-carboxamide-1-beta-d-ribofuranosyl 5'-monophosphate (AICAR) to 5-formaminoimidazole-4-carboxamide-1-beta-d-ribofuranosyl 5'-monophosphate (FAICAR) in the absence of folates. This is 5-formaminoimidazole-4-carboxamide-1-(beta)-D-ribofuranosyl 5'-monophosphate synthetase from Sulfolobus acidocaldarius (strain ATCC 33909 / DSM 639 / JCM 8929 / NBRC 15157 / NCIMB 11770).